The primary structure comprises 162 residues: Shikimate kinase (162 aa).

Position 11–16 (11–16 (GSGKSS)) interacts with ATP. Serine 15 serves as a coordination point for Mg(2+). Substrate contacts are provided by aspartate 33, arginine 57, and glycine 80. Arginine 116 lines the ATP pocket. Arginine 132 provides a ligand contact to substrate.

It belongs to the shikimate kinase family. Monomer. It depends on Mg(2+) as a cofactor.

The protein localises to the cytoplasm. It catalyses the reaction shikimate + ATP = 3-phosphoshikimate + ADP + H(+). It participates in metabolic intermediate biosynthesis; chorismate biosynthesis; chorismate from D-erythrose 4-phosphate and phosphoenolpyruvate: step 5/7. Functionally, catalyzes the specific phosphorylation of the 3-hydroxyl group of shikimic acid using ATP as a cosubstrate. The protein is Shikimate kinase of Helicobacter pylori (strain Shi470).